A 270-amino-acid chain; its full sequence is 3-phenylpropionate-dihydrodiol/cinnamic acid-dihydrodiol dehydrogenase (270 aa).

10–34 (FITGGGSGLGLALVERFIEEGAQVA) is an NAD(+) binding site. S143 contacts substrate. Catalysis depends on Y156, which acts as the Proton acceptor.

Belongs to the short-chain dehydrogenases/reductases (SDR) family.

It carries out the reaction 3-(cis-5,6-dihydroxycyclohexa-1,3-dien-1-yl)propanoate + NAD(+) = 3-(2,3-dihydroxyphenyl)propanoate + NADH + H(+). It catalyses the reaction (2E)-3-(cis-5,6-dihydroxycyclohexa-1,3-dien-1-yl)prop-2-enoate + NAD(+) = (2E)-3-(2,3-dihydroxyphenyl)prop-2-enoate + NADH + H(+). It functions in the pathway aromatic compound metabolism; 3-phenylpropanoate degradation. In terms of biological role, converts 3-phenylpropionate-dihydrodiol (PP-dihydrodiol) and cinnamic acid-dihydrodiol (CI-dihydrodiol) into 3-(2,3-dihydroxylphenyl)propanoic acid (DHPP) and 2,3-dihydroxicinnamic acid (DHCI), respectively. In Escherichia coli O157:H7, this protein is 3-phenylpropionate-dihydrodiol/cinnamic acid-dihydrodiol dehydrogenase.